The primary structure comprises 688 residues: Glycine--tRNA ligase beta subunit (688 aa).

The protein belongs to the class-II aminoacyl-tRNA synthetase family. In terms of assembly, tetramer of two alpha and two beta subunits.

Its subcellular location is the cytoplasm. It catalyses the reaction tRNA(Gly) + glycine + ATP = glycyl-tRNA(Gly) + AMP + diphosphate. This is Glycine--tRNA ligase beta subunit from Syntrophomonas wolfei subsp. wolfei (strain DSM 2245B / Goettingen).